The sequence spans 88 residues: Large ribosomal subunit protein bL27 (88 aa).

This sequence belongs to the bacterial ribosomal protein bL27 family.

The sequence is that of Large ribosomal subunit protein bL27 from Mycolicibacterium smegmatis (strain ATCC 700084 / mc(2)155) (Mycobacterium smegmatis).